The sequence spans 56 residues: Ribosome biogenesis protein Nop10 (56 aa).

This sequence belongs to the NOP10 family.

Involved in ribosome biogenesis; more specifically in 18S rRNA pseudouridylation and in cleavage of pre-rRNA. The chain is Ribosome biogenesis protein Nop10 from Methanococcoides burtonii (strain DSM 6242 / NBRC 107633 / OCM 468 / ACE-M).